The primary structure comprises 370 residues: Dual-specificity RNA methyltransferase RlmN (370 aa).

The active-site Proton acceptor is Glu97. The region spanning 103-340 (EKSRGTLCIS…CTVRRTRGDD (238 aa)) is the Radical SAM core domain. Cys110 and Cys345 form a disulfide bridge. 3 residues coordinate [4Fe-4S] cluster: Cys117, Cys121, and Cys124. Residues 170 to 171 (GE), Ser202, 224 to 226 (SLH), and Asn302 each bind S-adenosyl-L-methionine. Cys345 serves as the catalytic S-methylcysteine intermediate.

It belongs to the radical SAM superfamily. RlmN family. It depends on [4Fe-4S] cluster as a cofactor.

The protein localises to the cytoplasm. The enzyme catalyses adenosine(2503) in 23S rRNA + 2 reduced [2Fe-2S]-[ferredoxin] + 2 S-adenosyl-L-methionine = 2-methyladenosine(2503) in 23S rRNA + 5'-deoxyadenosine + L-methionine + 2 oxidized [2Fe-2S]-[ferredoxin] + S-adenosyl-L-homocysteine. The catalysed reaction is adenosine(37) in tRNA + 2 reduced [2Fe-2S]-[ferredoxin] + 2 S-adenosyl-L-methionine = 2-methyladenosine(37) in tRNA + 5'-deoxyadenosine + L-methionine + 2 oxidized [2Fe-2S]-[ferredoxin] + S-adenosyl-L-homocysteine. Functionally, specifically methylates position 2 of adenine 2503 in 23S rRNA and position 2 of adenine 37 in tRNAs. m2A2503 modification seems to play a crucial role in the proofreading step occurring at the peptidyl transferase center and thus would serve to optimize ribosomal fidelity. The sequence is that of Dual-specificity RNA methyltransferase RlmN from Hydrogenovibrio crunogenus (strain DSM 25203 / XCL-2) (Thiomicrospira crunogena).